A 660-amino-acid polypeptide reads, in one-letter code: Bifunctional polymyxin resistance protein ArnA (660 aa).

The interval methionine 1 to leucine 304 is formyltransferase ArnAFT. Histidine 86–isoleucine 88 provides a ligand contact to (6R)-10-formyltetrahydrofolate. Histidine 104 (proton donor; for formyltransferase activity) is an active-site residue. Residues arginine 114 and valine 136–aspartate 140 contribute to the (6R)-10-formyltetrahydrofolate site. The dehydrogenase ArnADH stretch occupies residues arginine 314 to serine 660. NAD(+)-binding positions include aspartate 347 and aspartate 368 to isoleucine 369. UDP-alpha-D-glucuronate contacts are provided by residues alanine 393, tyrosine 398, and threonine 432–serine 433. The Proton acceptor; for decarboxylase activity role is filled by glutamate 434. UDP-alpha-D-glucuronate-binding positions include arginine 460, asparagine 492, lysine 526–arginine 535, and tyrosine 613. Arginine 619 functions as the Proton donor; for decarboxylase activity in the catalytic mechanism.

The protein in the N-terminal section; belongs to the Fmt family. UDP-L-Ara4N formyltransferase subfamily. This sequence in the C-terminal section; belongs to the NAD(P)-dependent epimerase/dehydratase family. UDP-glucuronic acid decarboxylase subfamily. In terms of assembly, homohexamer, formed by a dimer of trimers.

The enzyme catalyses UDP-alpha-D-glucuronate + NAD(+) = UDP-beta-L-threo-pentopyranos-4-ulose + CO2 + NADH. The catalysed reaction is UDP-4-amino-4-deoxy-beta-L-arabinose + (6R)-10-formyltetrahydrofolate = UDP-4-deoxy-4-formamido-beta-L-arabinose + (6S)-5,6,7,8-tetrahydrofolate + H(+). It functions in the pathway nucleotide-sugar biosynthesis; UDP-4-deoxy-4-formamido-beta-L-arabinose biosynthesis; UDP-4-deoxy-4-formamido-beta-L-arabinose from UDP-alpha-D-glucuronate: step 1/3. Its pathway is nucleotide-sugar biosynthesis; UDP-4-deoxy-4-formamido-beta-L-arabinose biosynthesis; UDP-4-deoxy-4-formamido-beta-L-arabinose from UDP-alpha-D-glucuronate: step 3/3. The protein operates within bacterial outer membrane biogenesis; lipopolysaccharide biosynthesis. Its function is as follows. Bifunctional enzyme that catalyzes the oxidative decarboxylation of UDP-glucuronic acid (UDP-GlcUA) to UDP-4-keto-arabinose (UDP-Ara4O) and the addition of a formyl group to UDP-4-amino-4-deoxy-L-arabinose (UDP-L-Ara4N) to form UDP-L-4-formamido-arabinose (UDP-L-Ara4FN). The modified arabinose is attached to lipid A and is required for resistance to polymyxin and cationic antimicrobial peptides. The polypeptide is Bifunctional polymyxin resistance protein ArnA (Shigella boydii serotype 4 (strain Sb227)).